We begin with the raw amino-acid sequence, 115 residues long: Large ribosomal subunit protein bL19 (115 aa).

Belongs to the bacterial ribosomal protein bL19 family.

In terms of biological role, this protein is located at the 30S-50S ribosomal subunit interface and may play a role in the structure and function of the aminoacyl-tRNA binding site. This chain is Large ribosomal subunit protein bL19, found in Streptococcus thermophilus (strain CNRZ 1066).